Consider the following 805-residue polypeptide: Angiotensin-converting enzyme 2 (805 aa).

A signal peptide spans 1–17 (MSGSFWLLLSFAALTAA). Topologically, residues 18–740 (QSTTEELAKT…LSPPYRPPVT (723 aa)) are extracellular. Positions 19-607 (STTEELAKTF…QNRNSFVGWD (589 aa)) constitute a Peptidase M2 domain. An interaction with SARS S protein region spans residues 30 to 41 (ETFNYEAQELSY). A glycan (N-linked (GlcNAc...) asparagine) is linked at asparagine 53. Interaction with SARS S protein regions lie at residues 82–84 (TYP) and 90–93 (DAKI). A disulfide bridge links cysteine 133 with cysteine 141. Arginine 169 is a binding site for chloride. Asparagine 216 carries an N-linked (GlcNAc...) asparagine glycan. Arginine 273 is a substrate binding site. Asparagine 322 carries an N-linked (GlcNAc...) asparagine glycan. A disulfide bridge connects residues cysteine 344 and cysteine 361. 345 to 346 (HP) is a substrate binding site. Residues 353-357 (KGDFR) form an interaction with SARS S protein region. Histidine 374 contacts Zn(2+). Residue glutamate 375 is the Proton acceptor of the active site. Histidine 378 and glutamate 402 together coordinate Zn(2+). Residues tryptophan 477 and lysine 481 each contribute to the chloride site. The active-site Proton donor is histidine 505. Tyrosine 515 contacts substrate. An intrachain disulfide couples cysteine 530 to cysteine 542. Asparagine 546 carries N-linked (GlcNAc...) asparagine glycosylation. One can recognise a Collectrin-like domain in the interval 614-805 (SDQSIKVRIS…QHADDVQTSF (192 aa)). Positions 652-659 (REYFSKVK) are essential for cleavage by ADAM17. 2 N-linked (GlcNAc...) asparagine glycosylation sites follow: asparagine 660 and asparagine 690. The essential for cleavage by TMPRSS11D and TMPRSS2 stretch occupies residues 697–716 (RSEVEDAIRMSRSRINDAFR). Residues 741-761 (IWLIVFGVVMGAIVVGIVLLI) traverse the membrane as a helical segment. Over 762-805 (VSGIRNRRKNDQAGSEENPYASVDLNKGENNPGFQHADDVQTSF) the chain is Cytoplasmic. Positions 771–805 (NDQAGSEENPYASVDLNKGENNPGFQHADDVQTSF) are disordered. Residues 778-786 (ENPYASVDL) carry the LIR motif. Tyrosine 781 carries the post-translational modification Phosphotyrosine. Residues 781–784 (YASV) carry the Endocytic sorting signal motif. The short motif at 781 to 785 (YASVD) is the SH2-binding element. Phosphoserine is present on serine 783. The short motif at 792–795 (NPGF) is the PTB element. Residues 803 to 805 (TSF) carry the PDZ-binding motif.

It belongs to the peptidase M2 family. Homodimer. Interacts with the catalytically active form of TMPRSS2. Interacts with SLC6A19; this interaction is essential for expression and function of SLC6A19 in intestine. Interacts with ITGA5:ITGB1. Probably interacts (via endocytic sorting signal motif) with AP2M1; the interaction is inhibited by phosphorylation of Tyr-781. Interacts (via PDZ-binding motif) with NHERF1 (via PDZ domains); the interaction may enhance ACE2 membrane residence. As to quaternary structure, (Microbial infection) Interacts with SARS-CoV S protein. Requires Zn(2+) as cofactor. The cofactor is chloride. In terms of processing, proteolytic cleavage by ADAM17 generates a secreted form. Also cleaved by serine proteases: TMPRSS2, TMPRSS11D and HPN/TMPRSS1. Post-translationally, phosphorylated. Phosphorylation at Tyr-781 probably inhibits interaction with AP2M1 and enables interactions with proteins containing SH2 domains.

Its subcellular location is the secreted. The protein localises to the cell membrane. It localises to the cytoplasm. It is found in the cell projection. The protein resides in the cilium. Its subcellular location is the apical cell membrane. The enzyme catalyses angiotensin II + H2O = angiotensin-(1-7) + L-phenylalanine. The catalysed reaction is angiotensin I + H2O = angiotensin-(1-9) + L-leucine. Essential counter-regulatory carboxypeptidase of the renin-angiotensin hormone system that is a critical regulator of blood volume, systemic vascular resistance, and thus cardiovascular homeostasis. Converts angiotensin I to angiotensin 1-9, a nine-amino acid peptide with anti-hypertrophic effects in cardiomyocytes, and angiotensin II to angiotensin 1-7, which then acts as a beneficial vasodilator and anti-proliferation agent, counterbalancing the actions of the vasoconstrictor angiotensin II. Also removes the C-terminal residue from three other vasoactive peptides, neurotensin, kinetensin, and des-Arg bradykinin, but is not active on bradykinin. Also cleaves other biological peptides, such as apelins, casomorphins and dynorphin A. Plays an important role in amino acid transport by acting as binding partner of amino acid transporter SLC6A19 in intestine, regulating trafficking, expression on the cell surface, and its catalytic activity. In terms of biological role, (Microbial infection) Acts as a receptor for human coronavirus SARS. This chain is Angiotensin-converting enzyme 2 (ACE2), found in Paguma larvata (Masked palm civet).